The chain runs to 374 residues: Fe(2+) transport protein 1 (374 aa).

The signal sequence occupies residues 1 to 33 (MATPRTLVPILPPVAALLLLLVAASSIPILAAA). Over 34 to 62 (QPADACGGAPDQAAADGACHDVPRALRLK) the chain is Extracellular. Residues 63 to 83 (LIAIPTILVSSVVGVCLPLLS) traverse the membrane as a helical segment. At 84-92 (RSVPALRPD) the chain is on the cytoplasmic side. Residues 93–113 (GGLFAVVKAFASGVILATGYM) form a helical membrane-spanning segment. At 114-137 (HVLPDAFNNLTSPCLPRKPWSEFP) the chain is on the extracellular side. A helical transmembrane segment spans residues 138–158 (FAAFVAMLAAVSTLMADSLML). The Cytoplasmic portion of the chain corresponds to 159 to 219 (TYYNRSKPRP…ATQVQLRRNR (61 aa)). The tract at residues 166–199 (PRPSSGGDVAAVADHGESPDQGHRHGHGHGHGHG) is disordered. Over residues 179 to 188 (DHGESPDQGH) the composition is skewed to basic and acidic residues. The chain crosses the membrane as a helical span at residues 220–240 (VVVQVLEIGIVVHSVVIGLGM). Residues 241–251 (GASQNVCTIRP) lie on the Extracellular side of the membrane. A helical membrane pass occupies residues 252-272 (LVAAMCFHQMFEGMGLGGCIL). Residues 273 to 282 (QAEYGRRMRS) lie on the Cytoplasmic side of the membrane. Residues 283–303 (VLVFFFSTTTPFGIALGLALT) traverse the membrane as a helical segment. Over 304–313 (RVYRDNSPTA) the chain is Extracellular. Residues 314–334 (LIVVGLLNAASAGLLHYMALV) form a helical membrane-spanning segment. Topologically, residues 335 to 353 (ELLAADFMGPKLQGNVRLQ) are cytoplasmic. Residues 354-374 (LAAFLAVLLGAGGMSVMAKWA) traverse the membrane as a helical segment.

Belongs to the ZIP transporter (TC 2.A.5) family. As to expression, expressed in companion cells in the upper region of the root.

The protein resides in the cell membrane. Functionally, iron transporter involved in the uptake of iron from the rhizosphere across the plasma membrane in the root epidermal layer. May also transport other divalent cations. This is Fe(2+) transport protein 1 (IRT1) from Oryza sativa subsp. japonica (Rice).